The sequence spans 404 residues: Probable tRNA sulfurtransferase (404 aa).

The THUMP domain maps to 60–165 (QPIVEALKLV…DEAAYISYEE (106 aa)). ATP-binding positions include 183–184 (ML), 208–209 (HF), Arg265, Gly287, and Gln296.

The protein belongs to the ThiI family.

The protein resides in the cytoplasm. It carries out the reaction [ThiI sulfur-carrier protein]-S-sulfanyl-L-cysteine + a uridine in tRNA + 2 reduced [2Fe-2S]-[ferredoxin] + ATP + H(+) = [ThiI sulfur-carrier protein]-L-cysteine + a 4-thiouridine in tRNA + 2 oxidized [2Fe-2S]-[ferredoxin] + AMP + diphosphate. It catalyses the reaction [ThiS sulfur-carrier protein]-C-terminal Gly-Gly-AMP + S-sulfanyl-L-cysteinyl-[cysteine desulfurase] + AH2 = [ThiS sulfur-carrier protein]-C-terminal-Gly-aminoethanethioate + L-cysteinyl-[cysteine desulfurase] + A + AMP + 2 H(+). The protein operates within cofactor biosynthesis; thiamine diphosphate biosynthesis. Its function is as follows. Catalyzes the ATP-dependent transfer of a sulfur to tRNA to produce 4-thiouridine in position 8 of tRNAs, which functions as a near-UV photosensor. Also catalyzes the transfer of sulfur to the sulfur carrier protein ThiS, forming ThiS-thiocarboxylate. This is a step in the synthesis of thiazole, in the thiamine biosynthesis pathway. The sulfur is donated as persulfide by IscS. The polypeptide is Probable tRNA sulfurtransferase (Streptococcus pyogenes serotype M1).